The following is a 379-amino-acid chain: Gonadotropin-releasing hormone II receptor (379 aa).

Residues 1-40 lie on the Extracellular side of the membrane; it reads MSAGNGTPWGSAAGEESWAASGVAVEGSELPTFSAAAKVR. A helical transmembrane segment spans residues 41 to 60; the sequence is VGVTIVLFVSSAGGNLAVLW. Over 61 to 76 the chain is Cytoplasmic; that stretch reads SVTRPQPSQLRPSPVR. The chain crosses the membrane as a helical span at residues 77 to 96; sequence TLFAHLAAADLLVTFVVMPL. The Extracellular segment spans residues 97–114; that stretch reads DATWNITVQWLAEDIACR. Residue Asn-101 is glycosylated (N-linked (GlcNAc...) asparagine). Cysteines 113 and 188 form a disulfide. The chain crosses the membrane as a helical span at residues 115 to 136; sequence TLMFLKLMAMYSAAFLPVVIGL. Residues 137–160 lie on the Cytoplasmic side of the membrane; it reads DRQAAVLNPLGSRSGVRKLLGAAW. A helical transmembrane segment spans residues 161–178; it reads GLSFLLALPQLFLFHTVH. At 179 to 204 the chain is on the extracellular side; sequence RAGPVPFTQCVTKGSFKARWQETTYN. Residues 205-224 form a helical membrane-spanning segment; sequence LFTFRCLFLLPLTAMAICYS. Residues 225–278 lie on the Cytoplasmic side of the membrane; the sequence is HIVLSVSSPQTRKGSHAPAGEFALCRSFDNCPRVRLWALRLALLILLTFILCWT. The helical transmembrane segment at 279–297 threads the bilayer; sequence PYYLLGLWYWFSPTMLTEV. Residues 298-303 are Extracellular-facing; that stretch reads PPSLSH. Residues 304-323 traverse the membrane as a helical segment; that stretch reads ILFLFGLLNAPLDPLLYGAF. At 324–379 the chain is on the cytoplasmic side; it reads TLGCQRGHQELSIDSSNEGSGRMLQQEIHALRQQEVQKTVTSRSAGETKDISITSI.

It belongs to the G-protein coupled receptor 1 family. Post-translationally, phosphorylated on the C-terminal cytoplasmic tail.

The protein resides in the cell membrane. Functionally, receptor for gonadotropin releasing hormone II (GnRH II). This receptor mediates its action by association with G proteins that activate a phosphatidylinositol-calcium second messenger system. The polypeptide is Gonadotropin-releasing hormone II receptor (GNRHR2) (Macaca mulatta (Rhesus macaque)).